The following is a 498-amino-acid chain: MSPQTETKASVGFKAGVKDYKLTYYTPDYETKDTDILAAFRVTPQPGVPPEEAGAAVAAESSTGTWTTVWTDGLTSLDRYKGRCYRIERVIGEKDQYIAYVAYPLDLFEEGSVTNLFTSIVGNVFGFKALRALRLEDLRIPPAYTKTFQGPPHGIQVERDKLNKYGRPLLGCTIKPKLGLSAKNYGRAVYECLRGGLDFTKDDENVNSQPFMRWRDRFLFCAEAIYKSQAETGEIKGHYLNATAGTCEEMLKRALFARELGVPIIMHDYLTGGFTANTSLAHYCRENGLLLHIHRAMHAVIDRQKNHGIHFRVLAKALRLSGGDHIHSGTVVGKLEGEREITLGFVDLLRDDFVEQDRSRGIYFPQDWVSLPGVMPVASGGIHVWHMPALTEIFGDDSVLQFGGGTLGHPWGNAPGAVANRVALEACVQARNEGRDLAQEGNDILRQAGKWSPELAAACEVWKEIRFDFKPVDTLDPNDKKQRDNEDTLADKLFGDKG.

Residues 1–2 (MS) constitute a propeptide that is removed on maturation. Residue P3 is modified to N-acetylproline. The residue at position 14 (K14) is an N6,N6,N6-trimethyllysine. The substrate site is built by N123 and T173. K175 serves as the catalytic Proton acceptor. Residue K177 participates in substrate binding. Mg(2+) is bound by residues K201, D203, and E204. N6-carboxylysine is present on K201. H294 (proton acceptor) is an active-site residue. Positions 295, 327, and 379 each coordinate substrate. Residues 471–498 (PVDTLDPNDKKQRDNEDTLADKLFGDKG) form a disordered region.

Belongs to the RuBisCO large chain family. Type I subfamily. Heterohexadecamer of 8 large chains and 8 small chains; disulfide-linked. The disulfide link is formed within the large subunit homodimers. It depends on Mg(2+) as a cofactor. The disulfide bond which can form in the large chain dimeric partners within the hexadecamer appears to be associated with oxidative stress and protein turnover.

Its subcellular location is the plastid. It catalyses the reaction 2 (2R)-3-phosphoglycerate + 2 H(+) = D-ribulose 1,5-bisphosphate + CO2 + H2O. It carries out the reaction D-ribulose 1,5-bisphosphate + O2 = 2-phosphoglycolate + (2R)-3-phosphoglycerate + 2 H(+). RuBisCO catalyzes two reactions: the carboxylation of D-ribulose 1,5-bisphosphate, the primary event in carbon dioxide fixation, as well as the oxidative fragmentation of the pentose substrate in the photorespiration process. Both reactions occur simultaneously and in competition at the same active site. This is Ribulose bisphosphate carboxylase large chain (rbcL) from Cuscuta reflexa (Southern Asian dodder).